The primary structure comprises 1401 residues: Bifunctional 3'-5' exonuclease/ATP-dependent helicase WRN (1401 aa).

The tract at residues 1 to 271 is interaction with WRNIP1; the sequence is METTSLQRKF…FPVTCRNLET (271 aa). The KBM 1 signature appears at 6-18; that stretch reads LQRKFPEWMSMQS. One can recognise a 3'-5' exonuclease domain in the interval 51–223; it reads YEASDCSFLS…GLIIYQKLGN (173 aa). D76 and E78 together coordinate Zn(2+). K148 participates in a covalent cross-link: Glycyl lysine isopeptide (Lys-Gly) (interchain with G-Cter in SUMO2). Position 210 (D210) interacts with Zn(2+). Residues K235 and K246 each participate in a glycyl lysine isopeptide (Lys-Gly) (interchain with G-Cter in SUMO2) cross-link. The segment at 401–427 is disordered; sequence QAKEEKYNDVSHQLSEHLSPNDDENDS. S419, S433, and S444 each carry phosphoserine. A disordered region spans residues 464-492; it reads GTNGRLPPEEEDGHGNEAIKEEQEEEDHL. In terms of domain architecture, Helicase ATP-binding spans 522-688; that stretch reads HSVLEERRDN…ISCLNLKDPQ (167 aa). 535-542 lines the ATP pocket; sequence MATGYGKS. Positions 632-635 match the DEAH box motif; sequence DEAH. The region spanning 713–866 is the Helicase C-terminal domain; it reads DLKPFLVRKA…KLKMMVKMEK (154 aa). Zn(2+) is bound by residues C873, C900, C901, and C904. Residues 952-958 are interaction with DNA; that stretch reads RGSNSQR. Positions 1041–1106 are disordered; it reads LLPSSNPVSP…PSPGTSSSPL (66 aa). Polar residues predominate over residues 1043-1069; the sequence is PSSNPVSPETTQHSSNQNPAGLTTKQS. A compositionally biased stretch (basic and acidic residues) spans 1070–1081; the sequence is NLERTHSYKVPE. S1098 is modified (phosphoserine). The HRDC domain occupies 1115–1194; sequence LDARTGLYAR…KHFCQVTSVQ (80 aa). Residues 1323 to 1332 are compositionally biased toward polar residues; that stretch reads GSDSRTQPPC. The disordered stretch occupies residues 1323-1401; that stretch reads GSDSRTQPPC…AKTKKKGLFS (79 aa). The segment covering 1348–1358 has biased composition (basic and acidic residues); the sequence is ESCKESKEAVT. Phosphoserine is present on S1364. The KBM 2 motif lies at 1367–1376; it reads SKRKLPEWFA. The segment covering 1382 to 1392 has biased composition (polar residues); sequence SADTGSSSSMA. Residues 1388–1401 carry the XLM motif; the sequence is SSSMAKTKKKGLFS.

The protein belongs to the helicase family. RecQ subfamily. Monomer, and homooligomer. May exist as homodimer, homotrimer, homotetramer and/or homohexamer. Homotetramer, or homohexamer, when bound to DNA. Interacts via its N-terminal domain with WRNIP1. Interacts with EXO1, PCNA and SUPV3L1. Interacts with PML (isoform PML-4). Interacts (via KBM motif) with XRCC5 and XRCC6; promoting recruitment to DNA damage sites. Interacts with RECQL5; this interaction stimulates WRN helicase activity on DNA fork duplexes. The cofactor is Zn(2+). Mn(2+) serves as cofactor. Phosphorylated by PRKDC. In terms of tissue distribution, expressed ubiquitously in most organs at a low level, highly expressed in testis, ovary and spleen.

The protein localises to the nucleus. The protein resides in the nucleolus. It localises to the nucleoplasm. Its subcellular location is the chromosome. It carries out the reaction Couples ATP hydrolysis with the unwinding of duplex DNA by translocating in the 3'-5' direction.. It catalyses the reaction ATP + H2O = ADP + phosphate + H(+). With respect to regulation, zinc ions stimulate the exonuclease activity. Functionally, multifunctional enzyme that has magnesium and ATP-dependent 3'-5' DNA-helicase activity. Has 3'-&gt;5' exonuclease activity on forked dsDNA. Has no nuclease activity towards single-stranded DNA or blunt-ended double-stranded DNA. Binds preferentially to DNA substrates containing alternate secondary structures, such as replication forks and Holliday junctions. May play an important role in the dissociation of joint DNA molecules that can arise as products of homologous recombination, at stalled replication forks or during DNA repair. Alleviates stalling of DNA polymerases at the site of DNA lesions. Unwinds some G-quadruplex DNA. Plays a role in the formation of DNA replication focal centers; stably associates with foci elements generating binding sites for RP-A. Plays a role in double-strand break repair after gamma-irradiation. This is Bifunctional 3'-5' exonuclease/ATP-dependent helicase WRN (Wrn) from Mus musculus (Mouse).